The primary structure comprises 265 residues: Chorismate mutase 2 (265 aa).

The region spanning 10-265 (GSGCSNVLSL…EVEYLLRRLD (256 aa)) is the Chorismate mutase domain.

As to quaternary structure, homodimer. Expressed in roots, stems, cauline leaves and flowers, and at lower levels in rosette leaves and siliques.

It is found in the cytoplasm. Its subcellular location is the cytosol. It catalyses the reaction chorismate = prephenate. Its pathway is metabolic intermediate biosynthesis; prephenate biosynthesis; prephenate from chorismate: step 1/1. With respect to regulation, no allosteric regulation. In Arabidopsis thaliana (Mouse-ear cress), this protein is Chorismate mutase 2.